Here is a 377-residue protein sequence, read N- to C-terminus: Ferric enterobactin transport protein FepE (377 aa).

The Cytoplasmic portion of the chain corresponds to 1-41 (MSSLNIKQGSDAHFPDYPLASPSNNEIDLLNLISVLWRAKK). The helical transmembrane segment at 42–62 (TVMAVVFAFACAGLLISFILP) threads the bilayer. The Periplasmic segment spans residues 63–338 (QKWTSAAVVT…LPVKKDGPGK (276 aa)). The helical transmembrane segment at 339–359 (AIIVILSALIGGMVACGGVLL) threads the bilayer. Over 360-377 (RYAMASRKQDAMMADHLV) the chain is Cytoplasmic.

Belongs to the WzzB/Cld/Rol family.

The protein localises to the cell inner membrane. Functionally, part of the ferric enterobactin transport system. The chain is Ferric enterobactin transport protein FepE (fepE) from Escherichia coli (strain K12).